Consider the following 93-residue polypeptide: Insertion element ISR1 uncharacterized 11 kDa protein A1 (93 aa).

Disordered stretches follow at residues 14 to 33 (RRAR…QERR) and 68 to 93 (RRRA…SAGR).

The protein is Insertion element ISR1 uncharacterized 11 kDa protein A1 of Rhizobium sp.